The sequence spans 132 residues: U10-hexatoxin-Hi1a (132 aa).

An N-terminal signal peptide occupies residues 1 to 20 (MKGFIVFSLSLCLVFTVCLA). Residues 21 to 30 (EDELMKEAVR) constitute a propeptide that is removed on maturation.

Contains 5 disulfide bonds. In terms of tissue distribution, expressed by the venom gland.

The protein resides in the secreted. Functionally, probable ion channel inhibitor. In Hadronyche infensa (Fraser island funnel-web spider), this protein is U10-hexatoxin-Hi1a.